Here is a 136-residue protein sequence, read N- to C-terminus: FK506-binding protein 2 (136 aa).

A signal peptide spans 1–17 (MLSQIWILFTFMVCVIA). Residues 45 to 134 (GDMVSVHYTG…DFDVELVDIA (90 aa)) form the PPIase FKBP-type domain.

This sequence belongs to the FKBP-type PPIase family. FKBP2 subfamily.

Its subcellular location is the endoplasmic reticulum. The catalysed reaction is [protein]-peptidylproline (omega=180) = [protein]-peptidylproline (omega=0). With respect to regulation, inhibited by both FK506 and rapamycin. Its function is as follows. PPIases accelerate the folding of proteins. It catalyzes the cis-trans isomerization of proline imidic peptide bonds in oligopeptides. The protein is FK506-binding protein 2 (FPR2) of Candida glabrata (strain ATCC 2001 / BCRC 20586 / JCM 3761 / NBRC 0622 / NRRL Y-65 / CBS 138) (Yeast).